The primary structure comprises 601 residues: A-type ATP synthase subunit A (601 aa).

236–243 lines the ATP pocket; the sequence is GPFGSGKT.

It belongs to the ATPase alpha/beta chains family. In terms of assembly, has multiple subunits with at least A(3), B(3), C, D, E, F, H, I and proteolipid K(x).

It is found in the cell membrane. The catalysed reaction is ATP + H2O + 4 H(+)(in) = ADP + phosphate + 5 H(+)(out). Component of the A-type ATP synthase that produces ATP from ADP in the presence of a proton gradient across the membrane. The A chain is the catalytic subunit. This chain is A-type ATP synthase subunit A, found in Hyperthermus butylicus (strain DSM 5456 / JCM 9403 / PLM1-5).